The primary structure comprises 166 residues: Deglycase PH1704 (166 aa).

A PfpI endopeptidase domain is found at 1–166 (MKVLFLTANE…WMREFVKLLK (166 aa)). Cysteine 100 serves as the catalytic Nucleophile. Histidine 101 is an active-site residue.

Belongs to the peptidase C56 family. Homohexamer formed by a dimer of trimers that assemble into a hollow ring structure.

The protein localises to the cytoplasm. The catalysed reaction is N(omega)-(1-hydroxy-2-oxopropyl)-L-arginyl-[protein] + H2O = lactate + L-arginyl-[protein] + H(+). The enzyme catalyses N(6)-(1-hydroxy-2-oxopropyl)-L-lysyl-[protein] + H2O = lactate + L-lysyl-[protein] + H(+). It catalyses the reaction S-(1-hydroxy-2-oxopropyl)-L-cysteinyl-[protein] + H2O = lactate + L-cysteinyl-[protein] + H(+). It carries out the reaction N(omega)-(1-hydroxy-2-oxoethyl)-L-arginyl-[protein] + H2O = L-arginyl-[protein] + glycolate + H(+). The catalysed reaction is N(6)-(1-hydroxy-2-oxoethyl)-L-lysyl-[protein] + H2O = glycolate + L-lysyl-[protein] + H(+). The enzyme catalyses S-(1-hydroxy-2-oxoethyl)-L-cysteinyl-[protein] + H2O = glycolate + L-cysteinyl-[protein] + H(+). Deglycase that catalyzes the deglycation of the Maillard adducts formed between amino groups of proteins and reactive carbonyl groups of glyoxals. Thus, functions as a protein deglycase that repairs methylglyoxal- and glyoxal-glycated proteins, and releases repaired proteins and lactate or glycolate, respectively. Deglycates cysteine, arginine and lysine residues in proteins, and thus reactivates these proteins by reversing glycation by glyoxals. Acts on early glycation intermediates (hemithioacetals and aminocarbinols), preventing the formation of advanced glycation endproducts (AGE) that cause irreversible damage. Also displays proteolytic activity. The polypeptide is Deglycase PH1704 (Pyrococcus horikoshii (strain ATCC 700860 / DSM 12428 / JCM 9974 / NBRC 100139 / OT-3)).